The following is a 358-amino-acid chain: Protein-glutamate methylesterase/protein-glutamine glutaminase 2 (358 aa).

The Response regulatory domain occupies 7 to 124; it reads SVLLVDDSAV…KNFLIESAAE (118 aa). Residue Asp58 is modified to 4-aspartylphosphate. In terms of domain architecture, CheB-type methylesterase spans 170–358; sequence AQTTERIVAI…QEIHQAILHR (189 aa). Residues Ser182, His208, and Asp304 contribute to the active site.

This sequence belongs to the CheB family. In terms of processing, phosphorylated by CheA. Phosphorylation of the N-terminal regulatory domain activates the methylesterase activity.

The protein localises to the cytoplasm. The catalysed reaction is [protein]-L-glutamate 5-O-methyl ester + H2O = L-glutamyl-[protein] + methanol + H(+). The enzyme catalyses L-glutaminyl-[protein] + H2O = L-glutamyl-[protein] + NH4(+). Its function is as follows. Involved in chemotaxis. Part of a chemotaxis signal transduction system that modulates chemotaxis in response to various stimuli. Catalyzes the demethylation of specific methylglutamate residues introduced into the chemoreceptors (methyl-accepting chemotaxis proteins or MCP) by CheR. Also mediates the irreversible deamidation of specific glutamine residues to glutamic acid. This chain is Protein-glutamate methylesterase/protein-glutamine glutaminase 2, found in Pseudomonas syringae pv. tomato (strain ATCC BAA-871 / DC3000).